Reading from the N-terminus, the 35-residue chain is Small toxic polypeptide LdrA (35 aa).

Residues 8–28 traverse the membrane as a helical segment; that stretch reads MIFWHDLAAPILAGIITAAIV.

Belongs to the Ldr toxic peptide family.

The protein resides in the cell inner membrane. Toxic component of a type I toxin-antitoxin (TA) system. Inhibits ATP synthesis possibly due to its insertion in the cell inner membrane, ATP levels drop over 50% 2 minutes after induction. Overexpression is toxic leading to cell death, it inhibits cell growth within 30 minutes; C-terminally tagged versions of the protein are toxic while N-terminally tagged versions are not. The polypeptide is Small toxic polypeptide LdrA (ldrA) (Escherichia coli (strain K12)).